The sequence spans 374 residues: Flagellar P-ring protein (374 aa).

A signal peptide spans 1 to 29 (MSGLGFTGVVRIAVMALLALAFLGAPAHA). The segment covering 296–311 (ESPQVSQPNPLSNGRT) has biased composition (polar residues). The segment at 296–316 (ESPQVSQPNPLSNGRTVMTPR) is disordered.

The protein belongs to the FlgI family. In terms of assembly, the basal body constitutes a major portion of the flagellar organelle and consists of four rings (L,P,S, and M) mounted on a central rod.

The protein localises to the periplasm. It is found in the bacterial flagellum basal body. In terms of biological role, assembles around the rod to form the L-ring and probably protects the motor/basal body from shearing forces during rotation. This is Flagellar P-ring protein from Nitrobacter winogradskyi (strain ATCC 25391 / DSM 10237 / CIP 104748 / NCIMB 11846 / Nb-255).